We begin with the raw amino-acid sequence, 628 residues long: tRNA uridine 5-carboxymethylaminomethyl modification enzyme MnmG (628 aa).

13–18 contacts FAD; the sequence is GAGHAG. Residue 273–287 participates in NAD(+) binding; the sequence is GPRYCPSIEDKIVRF.

It belongs to the MnmG family. Homodimer. Heterotetramer of two MnmE and two MnmG subunits. FAD is required as a cofactor.

The protein localises to the cytoplasm. Its function is as follows. NAD-binding protein involved in the addition of a carboxymethylaminomethyl (cmnm) group at the wobble position (U34) of certain tRNAs, forming tRNA-cmnm(5)s(2)U34. The chain is tRNA uridine 5-carboxymethylaminomethyl modification enzyme MnmG from Buchnera aphidicola subsp. Acyrthosiphon pisum (strain 5A).